The primary structure comprises 267 residues: Phosphonates import ATP-binding protein PhnC 1 (267 aa).

The region spanning 3 to 247 (LSLDGVDLVH…ALDALYANEQ (245 aa)) is the ABC transporter domain. An ATP-binding site is contributed by 36-43 (GPSGAGKT).

The protein belongs to the ABC transporter superfamily. Phosphonates importer (TC 3.A.1.9.1) family. As to quaternary structure, the complex is composed of two ATP-binding proteins (PhnC), two transmembrane proteins (PhnE) and a solute-binding protein (PhnD).

The protein localises to the cell inner membrane. It carries out the reaction phosphonate(out) + ATP + H2O = phosphonate(in) + ADP + phosphate + H(+). In terms of biological role, part of the ABC transporter complex PhnCDE involved in phosphonates import. Responsible for energy coupling to the transport system. This is Phosphonates import ATP-binding protein PhnC 1 from Pseudomonas aeruginosa (strain ATCC 15692 / DSM 22644 / CIP 104116 / JCM 14847 / LMG 12228 / 1C / PRS 101 / PAO1).